A 51-amino-acid polypeptide reads, in one-letter code: Large ribosomal subunit protein eL39 (51 aa).

This sequence belongs to the eukaryotic ribosomal protein eL39 family.

This Thermococcus gammatolerans (strain DSM 15229 / JCM 11827 / EJ3) protein is Large ribosomal subunit protein eL39.